A 282-amino-acid chain; its full sequence is MSDFSMETLKNLRQQTGVGLTKCKEALEHAKGNLEDAVVYLRKLGLASAGKKEHRETKEGVIAALVDERGAALVEVNVETDFVANNSVFRAFVTGLLSDLLDHKLSDVEALARVMSSQEPSLSVEELKAVTMQTVGENIRISRALYTPVSSGQSVGIYSHGNGKAVAMVFLSGSENQEALAKDIAMHIVASQPQFLSKDSVPQEVLEREREVFSSQVAGKLQEVVEKITQGKFKAFFQEACLLEQAFIKDPEVTIQGLIDRAAKASGEPLKVEHFVFWKMGA.

Positions 80 to 83 (TDFV) are involved in Mg(2+) ion dislocation from EF-Tu.

It belongs to the EF-Ts family.

Its subcellular location is the cytoplasm. Functionally, associates with the EF-Tu.GDP complex and induces the exchange of GDP to GTP. It remains bound to the aminoacyl-tRNA.EF-Tu.GTP complex up to the GTP hydrolysis stage on the ribosome. The protein is Elongation factor Ts of Chlamydia trachomatis serovar A (strain ATCC VR-571B / DSM 19440 / HAR-13).